Reading from the N-terminus, the 311-residue chain is Apolipoprotein E (311 aa).

Positions 1 to 18 (MKVWWAVLAAAILAGCRA) are cleaved as a signal peptide. Tandem repeats lie at residues 74-95 (MLME…EQLS), 96-116 (PMAQ…GALE), 117-138 (ADME…AMLG), 139-160 (QSTE…KRLL), 161-182 (RDAE…EGAE), 183-204 (RGVS…LRVA), 205-226 (TVGT…ERLR), and 227-248 (GHLE…EQVE). Residues 74–248 (MLMEETMKEV…RLNEVREQVE (175 aa)) form an 8 X 22 AA approximate tandem repeats region. Methionine 136 carries the methionine sulfoxide modification. Serine 140 is subject to Phosphoserine. The interval 151–161 (HLRKLRKRLLR) is LDL and other lipoprotein receptors binding. 155–158 (LRKR) is a heparin binding site. The lipid-binding and lipoprotein association stretch occupies residues 203-283 (VATVGTLAGR…SWFEPLVEDM (81 aa)). The O-linked (GalNAc...) threonine glycan is linked to threonine 205. Residue 222 to 229 (GERLRGHL) coordinates heparin. The tract at residues 259-311 (PQMRLQAEAFQARLKSWFEPLVEDMQRQWAGLVEKLQAAMPSKAPAAAPIENQ) is homooligomerization. Residues 271 to 283 (RLKSWFEPLVEDM) form a specificity for association with VLDL region.

Belongs to the apolipoprotein A1/A4/E family. In terms of assembly, homotetramer. May interact with ABCA1; functionally associated with ABCA1 in the biogenesis of HDLs. May interact with APP/A4 amyloid-beta peptide; the interaction is extremely stable in vitro but its physiological significance is unclear. May interact with MAPT. May interact with MAP2. In the cerebrospinal fluid, interacts with secreted SORL1. Interacts with PMEL; this allows the loading of PMEL luminal fragment on ILVs to induce fibril nucleation. In terms of processing, APOE exists as multiple glycosylated and sialylated glycoforms within cells and in plasma. The extent of glycosylation and sialylation are tissue and context specific. Post-translationally, glycated in plasma VLDL. Phosphorylated by FAM20C in the extracellular medium.

The protein resides in the secreted. Its subcellular location is the extracellular space. The protein localises to the extracellular matrix. It is found in the extracellular vesicle. It localises to the endosome. The protein resides in the multivesicular body. Functionally, APOE is an apolipoprotein, a protein associating with lipid particles, that mainly functions in lipoprotein-mediated lipid transport between organs via the plasma and interstitial fluids. APOE is a core component of plasma lipoproteins and is involved in their production, conversion and clearance. Apolipoproteins are amphipathic molecules that interact both with lipids of the lipoprotein particle core and the aqueous environment of the plasma. As such, APOE associates with chylomicrons, chylomicron remnants, very low density lipoproteins (VLDL) and intermediate density lipoproteins (IDL) but shows a preferential binding to high-density lipoproteins (HDL). It also binds a wide range of cellular receptors including the LDL receptor/LDLR and the very low-density lipoprotein receptor/VLDLR that mediate the cellular uptake of the APOE-containing lipoprotein particles. Finally, APOE also has a heparin-binding activity and binds heparan-sulfate proteoglycans on the surface of cells, a property that supports the capture and the receptor-mediated uptake of APOE-containing lipoproteins by cells. The polypeptide is Apolipoprotein E (APOE) (Oryctolagus cuniculus (Rabbit)).